The primary structure comprises 934 residues: AP-2 complex subunit alpha (934 aa).

Positions 623 to 670 (RVPENAEIRETKSPVPNSHNNAHSNAQTNHTSSANNANASSDLLGLST) are disordered. Residues 636 to 645 (PVPNSHNNAH) show a composition bias toward polar residues. Over residues 646 to 663 (SNAQTNHTSSANNANASS) the composition is skewed to low complexity.

The protein belongs to the adapter complexes large subunit family. Adaptor protein complex 2 (AP-2) is a heterotetramer composed of two large adaptins (alpha-type and beta-type subunits), a medium adaptin (mu-type subunit AP50) and a small adaptin (sigma-type subunit AP17).

The protein localises to the cell membrane. Its subcellular location is the membrane. It is found in the coated pit. In terms of biological role, adaptins are components of the adapter complexes which link clathrin to receptors in coated vesicles. Clathrin-associated protein complexes are believed to interact with the cytoplasmic tails of membrane proteins, leading to their selection and concentration. Alpha adaptin is a subunit of the plasma membrane adapter. In Anopheles gambiae (African malaria mosquito), this protein is AP-2 complex subunit alpha.